We begin with the raw amino-acid sequence, 938 residues long: MSDYKSTLNLPETGFPMRGDLAKREPGMLARWTDDDLYGIIRAAKKGKKTFILHDGPPYANGSIHIGHSVNKILKDIIVKSKGLSGYDSPYVPGWDCHGLPIELKVEQEYGKPGEKFTAAEFRAKCREYAATQVDGQRKDFIRLGVLGDWSHPYLTMDFKTEANIIRALGKIIGNGHLHKGAKPVHWCVDCRSALAEAEVEYYDKTSPSIDVAFQAVDQDALKAKFAVSNVNGPISLVIWTTTPWTLPANRAISIAPDFDYALVQIDGQAVILAKDLVESVMQRIGVTDYTILGTVKGAELELLRFTHPFMGFDVPAILGDHVTLDAGTGAVHTAPGHGPDDYVIGQKYGLETANPVGPDGTYLPGTYPTLDGVNVFKANDIVVALLQEKGALLHVEKMQHSYPCCWRHKTPIIFRATPQWFVSMDQKGLRAQSLKEIKGVQWIPDWGQARIESMVANRPDWCISRQRTWGVPMSLFVHKDTEELHPRTLELMEEVAKRVEVDGIQAWWDLDAKEILGDEADQYVKVPDTLDVWFDSGSTHSSVVDVRPEFAGHAADMYLEGSDQHRGWFMSSLMISTAMKGKAPYRQVLTHGFTVDGQGRKMSKSIGNTVSPQDVMNKLGADILRLWVASTDYTGEMAVSDEILKRAADSYRRIRNTARFLLANLNGFDPAKDMVKPEEMVVLDRWAVGCAKAAQEDILKAYEAYDFHEVVQRLMRFCSVEMGSFYLDIIKDRQYTAKADSVARRSCQTALYHIAEALVRWMAPILSFTADEVWGYLPGEREKYVFTGEWYEGLFGLADSEAMNDAFWDELLKVRGEVNKVIEQARADKKVGGSLEAAVTLYAEPELAAKLTALGDELRFVLLTSGATVADYNDAPADAQQSEVLKGLKVALSKAEGEKCPRCWHYTQDVGKVAEHAEICGRCVSNVAGDGEKRKFA.

The short motif at 58–68 is the 'HIGH' region element; sequence PYANGSIHIGH. K183 is modified (N6-acetyllysine). E561 contributes to the L-isoleucyl-5'-AMP binding site. The 'KMSKS' region motif lies at 602-606; sequence KMSKS. K605 serves as a coordination point for ATP. Zn(2+)-binding residues include C901, C904, C921, and C924.

This sequence belongs to the class-I aminoacyl-tRNA synthetase family. IleS type 1 subfamily. As to quaternary structure, monomer. Requires Zn(2+) as cofactor.

The protein localises to the cytoplasm. The enzyme catalyses tRNA(Ile) + L-isoleucine + ATP = L-isoleucyl-tRNA(Ile) + AMP + diphosphate. Catalyzes the attachment of isoleucine to tRNA(Ile). As IleRS can inadvertently accommodate and process structurally similar amino acids such as valine, to avoid such errors it has two additional distinct tRNA(Ile)-dependent editing activities. One activity is designated as 'pretransfer' editing and involves the hydrolysis of activated Val-AMP. The other activity is designated 'posttransfer' editing and involves deacylation of mischarged Val-tRNA(Ile). This chain is Isoleucine--tRNA ligase, found in Escherichia fergusonii (strain ATCC 35469 / DSM 13698 / CCUG 18766 / IAM 14443 / JCM 21226 / LMG 7866 / NBRC 102419 / NCTC 12128 / CDC 0568-73).